A 474-amino-acid chain; its full sequence is Hepatocyte nuclear factor 4-alpha (474 aa).

A DNA-binding region (nuclear receptor) is located at residues 57–132 (SALCAICGDR…AGMKKEAVQN (76 aa)). 2 consecutive NR C4-type zinc fingers follow at residues 60-80 (CAIC…CDGC) and 96-120 (CRFS…LKKC). A phosphoserine; by PKA mark is found at Ser-142 and Ser-143. Phosphotyrosine is present on Tyr-144. An NR LBD domain is found at 147–377 (SSLPSINALL…NLLQEMLLGG (231 aa)). Thr-166 bears the Phosphothreonine mark. Position 167 is a phosphoserine (Ser-167). Residues Lys-234 and Lys-307 each participate in a glycyl lysine isopeptide (Lys-Gly) (interchain with G-Cter in ubiquitin) cross-link. A Phosphoserine; by AMPK modification is found at Ser-313. Positions 368 to 376 (NLLQEMLLG) match the 9aaTAD motif. Residues 413-450 (SNGQMCEWPRPRGQAATPETPQPSPPSGSGSESYKLLP) are disordered. Residues Thr-429 and Thr-432 each carry the phosphothreonine modification. A Phosphoserine modification is found at Ser-436. Lys-458 carries the N6-acetyllysine modification.

It belongs to the nuclear hormone receptor family. NR2 subfamily. Homodimerization is required for HNF4-alpha to bind to its recognition site. Interacts with CLOCK, BMAL1, CRY1, CRY2, PER1 and PER2. Interacts with NR0B2/SHP; the resulting heterodimer is transcriptionally inactive. Interacts with DDX3X; this interaction disrupts the interaction between HNF4 and NR0B2 that forms inactive heterodimers and enhances the formation of active HNF4 homodimers. In terms of processing, phosphorylation at Ser-313 by AMPK reduces the ability to form homodimers and bind DNA. Phosphorylated in the recognition sequence R-R-S-S near the DNA-binding domain; phosphorylation results in decrease in DNA-binding activity. Phosphorylation of HNF4 depends on the diet and is decreased by a carbohydrate-rich diet and is increased by fasting. Post-translationally, the N-terminus is blocked. Acetylation at Lys-458 lowers transcriptional activation by about two-fold. As to expression, liver, kidney and intestine.

It localises to the nucleus. Transcriptional regulator which controls the expression of hepatic genes during the transition of endodermal cells to hepatic progenitor cells, facilitating the recruitment of RNA pol II to the promoters of target genes. Activates the transcription of CYP2C38. Represses the CLOCK-BMAL1 transcriptional activity and is essential for circadian rhythm maintenance and period regulation in the liver and colon cells. This Rattus norvegicus (Rat) protein is Hepatocyte nuclear factor 4-alpha (Hnf4a).